Here is a 256-residue protein sequence, read N- to C-terminus: 2,3,4,5-tetrahydropyridine-2,6-dicarboxylate N-acetyltransferase (256 aa).

It belongs to the transferase hexapeptide repeat family. DapH subfamily.

It catalyses the reaction (S)-2,3,4,5-tetrahydrodipicolinate + acetyl-CoA + H2O = L-2-acetamido-6-oxoheptanedioate + CoA. The protein operates within amino-acid biosynthesis; L-lysine biosynthesis via DAP pathway; LL-2,6-diaminopimelate from (S)-tetrahydrodipicolinate (acetylase route): step 1/3. In terms of biological role, catalyzes the transfer of an acetyl group from acetyl-CoA to tetrahydrodipicolinate. This chain is 2,3,4,5-tetrahydropyridine-2,6-dicarboxylate N-acetyltransferase, found in Lactococcus lactis subsp. lactis (strain IL1403) (Streptococcus lactis).